The following is a 117-amino-acid chain: Fluoride-specific ion channel FluC 2 (117 aa).

Helical transmembrane passes span 1–21 and 46–66; these read MISIILVMIGGGFGAITRSAI and FLIGLNIGLSISISWFPAFFV. Residues glycine 71 and threonine 74 each coordinate Na(+). Residues 95–115 form a helical membrane-spanning segment; sequence LFLNYSLLQFIIGFIACYIGY.

The protein belongs to the fluoride channel Fluc/FEX (TC 1.A.43) family.

The protein resides in the cell membrane. It catalyses the reaction fluoride(in) = fluoride(out). Na(+) is not transported, but it plays an essential structural role and its presence is essential for fluoride channel function. Functionally, fluoride-specific ion channel. Important for reducing fluoride concentration in the cell, thus reducing its toxicity. The chain is Fluoride-specific ion channel FluC 2 from Staphylococcus aureus (strain MSSA476).